The following is a 193-amino-acid chain: MAQASLLACEGLAGVSLVPTAASKKMMLSQIASKQAENGERAGSPDVLRCSSQGHRKDSDKSRSRKDDDSLSEASHSKKTVKKVVVVEQNGSFQVKIPKNFVCEHCFGAFRSSYHLKRHILIHTGEKPFECDICDMRFIQKYHLERHKRVHSGEKPYQCERCHQCFSRTDRLLRHKRMCQGCQSKTSDGQFSL.

A disordered region spans residues 33–75; sequence SKQAENGERAGSPDVLRCSSQGHRKDSDKSRSRKDDDSLSEAS. Lys34 participates in a covalent cross-link: Glycyl lysine isopeptide (Lys-Gly) (interchain with G-Cter in SUMO2). Ser44 is subject to Phosphoserine. The segment covering 55–69 has biased composition (basic and acidic residues); the sequence is HRKDSDKSRSRKDDD. 2 consecutive C2H2-type zinc fingers follow at residues 101–123 and 129–151; these read FVCEHCFGAFRSSYHLKRHILIH and FECDICDMRFIQKYHLERHKRVH. The C2H2-type 3; atypical zinc-finger motif lies at 157 to 179; sequence YQCERCHQCFSRTDRLLRHKRMC.

This sequence belongs to the krueppel C2H2-type zinc-finger protein family.

It localises to the nucleus. Functionally, may be involved in transcriptional regulation. The sequence is that of Zinc finger protein 740 (ZNF740) from Homo sapiens (Human).